We begin with the raw amino-acid sequence, 505 residues long: MATIRADEISNIIRERIEQYNREVKIVNTGTVLQVGDGIARIYGLDEVMAGELVEFEEGTIGIALNLESKNVGVVLMGDGLLIQEGSSVKATGRIAQIPVSEAYLGRVINALAKPIDGRGEISSSESRLIESPAPGIISRRSVYEPLQTGLIAIDAMIPIGRGQRELIIGDRQTGKTAVATDTILNQQGNNVICVYVAIGQKASSVAQVVNALQERGAMEYTIVVAEAADSPATLQYLAPYTGAALAEYFMYRERHTLIIYDDPSKQAQAYRQMSLLLRRPPGREAYPGDVFYLHSRLLERAAKLSSRLGEGSMTALPIVETQSGDVSAYIPTNVISITDGQIFLSADLFNAGIRPAINVGISVSRVGSAAQIKAMKQVAGKLKLELAQFAELEAFAQFSSDLDKATQNQLARGQRLRELLKQSQAKPLTVAEQILTIYTGTNGYLDSFEIAQVRKFLDELRDYVKTRKPQFEEIISSTKIFTEEAQALLKDAIQEQKELFLVQE.

Residue 170 to 177 participates in ATP binding; sequence GDRQTGKT.

This sequence belongs to the ATPase alpha/beta chains family. In terms of assembly, F-type ATPases have 2 components, CF(1) - the catalytic core - and CF(0) - the membrane proton channel. CF(1) has five subunits: alpha(3), beta(3), gamma(1), delta(1), epsilon(1). CF(0) has four main subunits: a, b, b' and c.

The protein resides in the plastid. It is found in the chloroplast thylakoid membrane. The catalysed reaction is ATP + H2O + 4 H(+)(in) = ADP + phosphate + 5 H(+)(out). In terms of biological role, produces ATP from ADP in the presence of a proton gradient across the membrane. The alpha chain is a regulatory subunit. This chain is ATP synthase subunit alpha, chloroplastic, found in Oenothera elata subsp. hookeri (Hooker's evening primrose).